The following is a 574-amino-acid chain: Ankyrin repeat protein B19 (574 aa).

ANK repeat units follow at residues 56-87 (TGYT…DVTM), 135-164 (IKSR…DPNF), 167-213 (DGYT…NLNA), 217-249 (CGNT…NFEI), 253-285 (HGLT…NVGE), and 327-356 (EGKT…DINA). The region spanning 541–574 (NCLLTLLPSEIIYEILYMLTINDLYNISYPPTKV) is the F-box domain.

Belongs to the poxvirinae B18 protein family.

This is Ankyrin repeat protein B19 from Vaccinia virus (strain Western Reserve) (VACV).